The following is a 363-amino-acid chain: 3-isopropylmalate dehydrogenase (363 aa).

Residue 78–91 (GPKWENLPPESQPE) coordinates NAD(+). Substrate-binding residues include Arg-99, Arg-109, Arg-138, and Asp-227. Residues Asp-227, Asp-251, and Asp-255 each contribute to the Mg(2+) site. 285–297 (GSAPDIAGKNIAN) is a binding site for NAD(+).

It belongs to the isocitrate and isopropylmalate dehydrogenases family. LeuB type 1 subfamily. As to quaternary structure, homodimer. Mg(2+) serves as cofactor. The cofactor is Mn(2+).

It localises to the cytoplasm. It catalyses the reaction (2R,3S)-3-isopropylmalate + NAD(+) = 4-methyl-2-oxopentanoate + CO2 + NADH. It participates in amino-acid biosynthesis; L-leucine biosynthesis; L-leucine from 3-methyl-2-oxobutanoate: step 3/4. In terms of biological role, catalyzes the oxidation of 3-carboxy-2-hydroxy-4-methylpentanoate (3-isopropylmalate) to 3-carboxy-4-methyl-2-oxopentanoate. The product decarboxylates to 4-methyl-2 oxopentanoate. The sequence is that of 3-isopropylmalate dehydrogenase from Salmonella typhi.